We begin with the raw amino-acid sequence, 355 residues long: 3-dehydroquinate synthase (355 aa).

Residues 71-76 (EGEERK), 105-109 (GVVGD), 129-130 (TS), K142, and K151 each bind NAD(+). Zn(2+)-binding residues include E184, H246, and H263.

This sequence belongs to the sugar phosphate cyclases superfamily. Dehydroquinate synthase family. The cofactor is Co(2+). Zn(2+) is required as a cofactor. It depends on NAD(+) as a cofactor.

Its subcellular location is the cytoplasm. The catalysed reaction is 7-phospho-2-dehydro-3-deoxy-D-arabino-heptonate = 3-dehydroquinate + phosphate. Its pathway is metabolic intermediate biosynthesis; chorismate biosynthesis; chorismate from D-erythrose 4-phosphate and phosphoenolpyruvate: step 2/7. Its function is as follows. Catalyzes the conversion of 3-deoxy-D-arabino-heptulosonate 7-phosphate (DAHP) to dehydroquinate (DHQ). This is 3-dehydroquinate synthase from Streptococcus pneumoniae (strain Hungary19A-6).